The chain runs to 555 residues: Methyl-coenzyme M reductase subunit alpha (555 aa).

Gln-152 provides a ligand contact to coenzyme F430. Residues Arg-230, 261 to 262, and Arg-275 each bind coenzyme B; that span reads KH. Coenzyme M is bound by residues Tyr-337 and Tyr-448.

This sequence belongs to the methyl-coenzyme M reductase alpha subunit family. MCR is a hexamer of two alpha, two beta, and two gamma chains, forming a dimer of heterotrimers. The cofactor is coenzyme F430.

The protein localises to the cytoplasm. It catalyses the reaction coenzyme B + methyl-coenzyme M = methane + coenzyme M-coenzyme B heterodisulfide. The protein operates within one-carbon metabolism; methyl-coenzyme M reduction; methane from methyl-coenzyme M: step 1/1. Functionally, component of the methyl-coenzyme M reductase (MCR) I that catalyzes the reductive cleavage of methyl-coenzyme M (CoM-S-CH3 or 2-(methylthio)ethanesulfonate) using coenzyme B (CoB or 7-mercaptoheptanoylthreonine phosphate) as reductant which results in the production of methane and the mixed heterodisulfide of CoB and CoM (CoM-S-S-CoB). This is the final step in methanogenesis. In Methanococcus voltae, this protein is Methyl-coenzyme M reductase subunit alpha (mcrA).